We begin with the raw amino-acid sequence, 168 residues long: Photosystem I assembly protein Ycf3 (168 aa).

3 TPR repeats span residues 35-68, 72-105, and 120-153; these read AFTY…EIDP, SYIL…NPFL, and GEQA…TPGN.

Belongs to the Ycf3 family.

The protein localises to the plastid. Its subcellular location is the chloroplast thylakoid membrane. In terms of biological role, essential for the assembly of the photosystem I (PSI) complex. May act as a chaperone-like factor to guide the assembly of the PSI subunits. In Coffea arabica (Arabian coffee), this protein is Photosystem I assembly protein Ycf3.